The following is a 457-amino-acid chain: MLKSFRGGVHPDDSKKYTANKPIEIAPIPDKVFIPVRQHIGAPTSPVVQKGDEVKKGQLIAKSDAFVSANIYASTSGKVVDIGDYPHPGFGKCQAIVIEKDGKDEWVEGIPTSRNWKELSVKEMLGIIREAGIVGMGGATFPVHVKLAPPPDKKVDVFILNGAECEPYLTADYRSMLENSDKVVAGVQIIMKILNVEKAFVGIEDNKPKAIEAMKKAFEGTKVQVVGLPTKYPQGAEKMLINVLTGREVPSGGLPADVGAVVQNVGTCIAISDAVERGIPLIQRVTTISGGAIKEPKNILVRIGTTFKDAIDFCGGFKEEPVKIISGGPMMGFAQSNLDIPIMKGSSGILGLTKNDVNDGKESSCIRCGRCLKACPMHLNPSMLSILGQKDLYQEAKEEYNLLDCVECGSCVYTCPAKRKIVQYIRYLKSENRAAGEREKAKAAKAKEKKEKEEVLK.

4Fe-4S ferredoxin-type domains follow at residues 353-386 and 396-427; these read TKNDVNDGKESSCIRCGRCLKACPMHLNPSMLSI and AKEEYNLLDCVECGSCVYTCPAKRKIVQYIRY. [4Fe-4S] cluster contacts are provided by Cys365, Cys368, Cys371, Cys375, Cys405, Cys408, Cys411, and Cys415. Positions 433–457 are disordered; sequence RAAGEREKAKAAKAKEKKEKEEVLK.

The protein belongs to the 4Fe4S bacterial-type ferredoxin family. RnfC subfamily. The complex is composed of six subunits: RnfA, RnfB, RnfC, RnfD, RnfE and RnfG. Requires [4Fe-4S] cluster as cofactor.

It is found in the cell membrane. Functionally, part of a membrane-bound complex that couples electron transfer with translocation of ions across the membrane. Couples electron transfer from reduced ferredoxin to NAD(+) with translocation of H(+) out of the cell. Essential for energy conservation during autotrophic growth. Contributes to ATP synthesis during heterotrophic growth. This Clostridium ljungdahlii (strain ATCC 55383 / DSM 13528 / PETC) protein is Proton-translocating ferredoxin:NAD(+) oxidoreductase complex subunit C.